A 196-amino-acid polypeptide reads, in one-letter code: Phosphoheptose isomerase (196 aa).

The region spanning 36 to 196 (MVACLMNEGK…AVDYMLLGGD (161 aa)) is the SIS domain. 51 to 53 (NGG) contacts substrate. Zn(2+) contacts are provided by histidine 60 and glutamate 64. Substrate contacts are provided by residues glutamate 64, 93–94 (ND), 119–121 (STS), serine 124, and glutamine 174. Glutamine 174 and histidine 182 together coordinate Zn(2+).

The protein belongs to the SIS family. GmhA subfamily. As to quaternary structure, homotetramer. Zn(2+) is required as a cofactor.

It localises to the cytoplasm. It catalyses the reaction 2 D-sedoheptulose 7-phosphate = D-glycero-alpha-D-manno-heptose 7-phosphate + D-glycero-beta-D-manno-heptose 7-phosphate. It participates in carbohydrate biosynthesis; D-glycero-D-manno-heptose 7-phosphate biosynthesis; D-glycero-alpha-D-manno-heptose 7-phosphate and D-glycero-beta-D-manno-heptose 7-phosphate from sedoheptulose 7-phosphate: step 1/1. Catalyzes the isomerization of sedoheptulose 7-phosphate in D-glycero-D-manno-heptose 7-phosphate. The sequence is that of Phosphoheptose isomerase from Laribacter hongkongensis (strain HLHK9).